A 472-amino-acid chain; its full sequence is Kynureninase 2 (472 aa).

Pyridoxal 5'-phosphate is bound by residues Leu-133, Thr-134, 162–165 (FPSD), Asp-247, His-250, and Tyr-272. Position 273 is an N6-(pyridoxal phosphate)lysine (Lys-273). Positions 314 and 342 each coordinate pyridoxal 5'-phosphate.

It belongs to the kynureninase family. Homodimer. Requires pyridoxal 5'-phosphate as cofactor.

It is found in the cytoplasm. It catalyses the reaction L-kynurenine + H2O = anthranilate + L-alanine + H(+). It carries out the reaction 3-hydroxy-L-kynurenine + H2O = 3-hydroxyanthranilate + L-alanine + H(+). The protein operates within amino-acid degradation; L-kynurenine degradation; L-alanine and anthranilate from L-kynurenine: step 1/1. It functions in the pathway cofactor biosynthesis; NAD(+) biosynthesis; quinolinate from L-kynurenine: step 2/3. In terms of biological role, catalyzes the cleavage of L-kynurenine (L-Kyn) and L-3-hydroxykynurenine (L-3OHKyn) into anthranilic acid (AA) and 3-hydroxyanthranilic acid (3-OHAA), respectively. This chain is Kynureninase 2 (kyn-2), found in Neurospora crassa (strain ATCC 24698 / 74-OR23-1A / CBS 708.71 / DSM 1257 / FGSC 987).